The chain runs to 136 residues: Small integral membrane protein 23 (136 aa).

Over 1 to 31 (MTIQKTGCRGREAAEVVEQRRRSHHCDDRKQ) the chain is Cytoplasmic. A helical; Signal-anchor for type II membrane protein transmembrane segment spans residues 32 to 52 (TLLALLILVLYLGMGISGSSW). Residues 53–136 (EVSGQTKDCN…DLRPEDPCFT (84 aa)) lie on the Extracellular side of the membrane. Residues 92-124 (LKINLHGFLEKLEKEVRELEQLVRDLEFWLDAL) adopt a coiled-coil conformation.

The protein resides in the membrane. The polypeptide is Small integral membrane protein 23 (Smim23) (Mus musculus (Mouse)).